We begin with the raw amino-acid sequence, 468 residues long: UDP-N-acetylmuramate--L-alanine ligase (468 aa).

Residue 114–120 (GTHGKTT) coordinates ATP.

It belongs to the MurCDEF family.

The protein resides in the cytoplasm. It carries out the reaction UDP-N-acetyl-alpha-D-muramate + L-alanine + ATP = UDP-N-acetyl-alpha-D-muramoyl-L-alanine + ADP + phosphate + H(+). It functions in the pathway cell wall biogenesis; peptidoglycan biosynthesis. In terms of biological role, cell wall formation. The polypeptide is UDP-N-acetylmuramate--L-alanine ligase (Methylobacterium radiotolerans (strain ATCC 27329 / DSM 1819 / JCM 2831 / NBRC 15690 / NCIMB 10815 / 0-1)).